We begin with the raw amino-acid sequence, 255 residues long: Protein PH0439 (255 aa).

It belongs to the CinA family.

This is Protein PH0439 from Pyrococcus horikoshii (strain ATCC 700860 / DSM 12428 / JCM 9974 / NBRC 100139 / OT-3).